A 383-amino-acid polypeptide reads, in one-letter code: Succinyl-diaminopimelate desuccinylase (383 aa).

His74 provides a ligand contact to Zn(2+). The active site involves Asp76. Residue Asp107 coordinates Zn(2+). Glu141 (proton acceptor) is an active-site residue. Residues Glu142, Glu170, and His356 each coordinate Zn(2+).

The protein belongs to the peptidase M20A family. DapE subfamily. In terms of assembly, homodimer. Zn(2+) serves as cofactor. It depends on Co(2+) as a cofactor.

The enzyme catalyses N-succinyl-(2S,6S)-2,6-diaminopimelate + H2O = (2S,6S)-2,6-diaminopimelate + succinate. It functions in the pathway amino-acid biosynthesis; L-lysine biosynthesis via DAP pathway; LL-2,6-diaminopimelate from (S)-tetrahydrodipicolinate (succinylase route): step 3/3. Catalyzes the hydrolysis of N-succinyl-L,L-diaminopimelic acid (SDAP), forming succinate and LL-2,6-diaminopimelate (DAP), an intermediate involved in the bacterial biosynthesis of lysine and meso-diaminopimelic acid, an essential component of bacterial cell walls. In Polynucleobacter necessarius subsp. necessarius (strain STIR1), this protein is Succinyl-diaminopimelate desuccinylase.